Consider the following 384-residue polypeptide: 2-isopropylmalate synthase 2 (384 aa).

The Pyruvate carboxyltransferase domain maps to 9–260 (VYIVDTTLRD…DLGIDTSRFR (252 aa)). 4 residues coordinate Mn(2+): Asp-18, His-198, His-200, and Asn-234.

Belongs to the alpha-IPM synthase/homocitrate synthase family. LeuA type 1 subfamily. As to quaternary structure, homodimer. Mn(2+) serves as cofactor.

The protein localises to the cytoplasm. The catalysed reaction is 3-methyl-2-oxobutanoate + acetyl-CoA + H2O = (2S)-2-isopropylmalate + CoA + H(+). Its pathway is amino-acid biosynthesis; L-leucine biosynthesis; L-leucine from 3-methyl-2-oxobutanoate: step 1/4. Catalyzes the condensation of the acetyl group of acetyl-CoA with 3-methyl-2-oxobutanoate (2-ketoisovalerate) to form 3-carboxy-3-hydroxy-4-methylpentanoate (2-isopropylmalate). This Caldanaerobacter subterraneus subsp. tengcongensis (strain DSM 15242 / JCM 11007 / NBRC 100824 / MB4) (Thermoanaerobacter tengcongensis) protein is 2-isopropylmalate synthase 2.